We begin with the raw amino-acid sequence, 20 residues long: Trypsin inhibitor DE-3 (20 aa).

Belongs to the protease inhibitor I3 (leguminous Kunitz-type inhibitor) family.

Its function is as follows. Inhibition of trypsin. In Erythrina corallodendron (Coral tree), this protein is Trypsin inhibitor DE-3.